The sequence spans 493 residues: Probable polyol transporter 6 (493 aa).

12 helical membrane passes run 25–45 (SIVSIIFGYDTGVMSGAMVFI), 54–74 (VQIEVLTGILNLCALVGSLLA), 85–105 (YTIVLASILFMLGSILMGWGP), 116–136 (TAGLGVGFALMVAPVYSAEIA), 142–162 (GLLASLPHLCISIGILLGYIV), 177–197 (LMLGIAAVPSLVLAFGILKMP), 275–295 (VLLTALGIHFFQHASGIEAVL), 313–333 (LFLVTIGVGIMKTTFIFTATL), 343–363 (LLLTSVGGMVIALTMLGFGLT), 372–392 (LAWALVLSIVAAYSFVAFFSI), 414–434 (GASLGVAVNRVMNATVSMSFL), and 444–464 (GAFFMFAGVAAVAWNFFFFLL).

This sequence belongs to the major facilitator superfamily. Sugar transporter (TC 2.A.1.1) family.

The protein resides in the membrane. Plasma membrane sugar-proton symporter. This is Probable polyol transporter 6 (PLT6) from Arabidopsis thaliana (Mouse-ear cress).